Reading from the N-terminus, the 219-residue chain is Resolvase (219 aa).

A Resolvase/invertase-type recombinase catalytic domain is found at 15–159 (VARIYLRAST…EDRRERQRQG (145 aa)). Residue serine 23 is the O-(5'-phospho-DNA)-serine intermediate of the active site.

The protein belongs to the site-specific recombinase resolvase family.

Functionally, involved in plasmid partition. The chain is Resolvase (parA) from Escherichia coli.